The chain runs to 916 residues: Nonsense-mediated mRNA decay factor SMG8 (916 aa).

The disordered stretch occupies residues 566-626 (LENSNRTPDT…KNYASQGDAD (61 aa)). Positions 589 to 604 (LSGSQKSQDSASNLTF) are enriched in polar residues.

The protein belongs to the SMG8 family.

Involved in nonsense-mediated decay (NMD) of mRNAs containing premature stop codons. Probable component of kinase complex containing SMG1 and recruited to stalled ribosomes. In Aedes aegypti (Yellowfever mosquito), this protein is Nonsense-mediated mRNA decay factor SMG8.